A 572-amino-acid chain; its full sequence is mRNA cap guanine-N(7) methyltransferase (572 aa).

Disordered regions lie at residues 1–75 (MPED…GSRV) and 110–140 (EKAI…FPSS). Composition is skewed to basic and acidic residues over residues 24–39 (ANDG…RVHD) and 59–69 (SADENKDKKYD). The segment covering 123-140 (TTTTPSSTTSSSSSFPSS) has biased composition (low complexity). Residues 262-571 (SPIYKLRNFN…FYVAFVFEKV (310 aa)) form the mRNA cap 0 methyltransferase domain. 271–272 (NN) lines the mRNA pocket. Residues Lys275, Cys302, Asp324, Asp366, Gln396, and Tyr401 each contribute to the S-adenosyl-L-methionine site.

The protein belongs to the class I-like SAM-binding methyltransferase superfamily. mRNA cap 0 methyltransferase family.

The protein resides in the nucleus. The enzyme catalyses a 5'-end (5'-triphosphoguanosine)-ribonucleoside in mRNA + S-adenosyl-L-methionine = a 5'-end (N(7)-methyl 5'-triphosphoguanosine)-ribonucleoside in mRNA + S-adenosyl-L-homocysteine. Responsible for methylating the 5'-cap structure of mRNAs. This chain is mRNA cap guanine-N(7) methyltransferase (ABD1), found in Lodderomyces elongisporus (strain ATCC 11503 / CBS 2605 / JCM 1781 / NBRC 1676 / NRRL YB-4239) (Yeast).